The following is a 190-amino-acid chain: 7-methyl-GTP pyrophosphatase (190 aa).

Asp-69 serves as the catalytic Proton acceptor.

Belongs to the Maf family. YceF subfamily. A divalent metal cation is required as a cofactor.

Its subcellular location is the cytoplasm. The enzyme catalyses N(7)-methyl-GTP + H2O = N(7)-methyl-GMP + diphosphate + H(+). Its function is as follows. Nucleoside triphosphate pyrophosphatase that hydrolyzes 7-methyl-GTP (m(7)GTP). May have a dual role in cell division arrest and in preventing the incorporation of modified nucleotides into cellular nucleic acids. The polypeptide is 7-methyl-GTP pyrophosphatase (Xanthomonas oryzae pv. oryzae (strain MAFF 311018)).